Reading from the N-terminus, the 398-residue chain is 1-deoxy-D-xylulose 5-phosphate reductoisomerase (398 aa).

NADPH is bound by residues threonine 11, glycine 12, serine 13, isoleucine 14, arginine 38, asparagine 39, and asparagine 125. Lysine 126 contacts 1-deoxy-D-xylulose 5-phosphate. Glutamate 127 contributes to the NADPH binding site. Aspartate 151 is a binding site for Mn(2+). 1-deoxy-D-xylulose 5-phosphate contacts are provided by serine 152, glutamate 153, serine 179, and histidine 202. Residue glutamate 153 participates in Mn(2+) binding. NADPH is bound at residue glycine 208. Residues serine 215, asparagine 220, lysine 221, and glutamate 224 each contribute to the 1-deoxy-D-xylulose 5-phosphate site. Residue glutamate 224 participates in Mn(2+) binding.

It belongs to the DXR family. It depends on Mg(2+) as a cofactor. Requires Mn(2+) as cofactor.

The enzyme catalyses 2-C-methyl-D-erythritol 4-phosphate + NADP(+) = 1-deoxy-D-xylulose 5-phosphate + NADPH + H(+). The protein operates within isoprenoid biosynthesis; isopentenyl diphosphate biosynthesis via DXP pathway; isopentenyl diphosphate from 1-deoxy-D-xylulose 5-phosphate: step 1/6. Functionally, catalyzes the NADPH-dependent rearrangement and reduction of 1-deoxy-D-xylulose-5-phosphate (DXP) to 2-C-methyl-D-erythritol 4-phosphate (MEP). The chain is 1-deoxy-D-xylulose 5-phosphate reductoisomerase from Burkholderia mallei (strain NCTC 10247).